The following is an 838-amino-acid chain: Protein P (838 aa).

The terminal protein domain (TP) stretch occupies residues 1 to 177; it reads MPLSYQHFRK…FCGSPYSWEQ (177 aa). The spacer stretch occupies residues 178–341; sequence ELQHQTSTRH…YCLTHIVNLL (164 aa). Disordered stretches follow at residues 215–238 and 285–311; these read QSRLGLQPQQGSMARGKSGRSGSI and STSKRQSSSGHAVEFHNIPPSSARSQS. Residues 285-294 are compositionally biased toward polar residues; it reads STSKRQSSSG. A polymerase/reverse transcriptase domain (RT) region spans residues 342 to 685; the sequence is EDWGPCTEHG…YLHLYPVARQ (344 aa). The Reverse transcriptase domain occupies 352–595; sequence EHNIRIPRTP…YSLNFMGYVI (244 aa). Mg(2+) contacts are provided by Asp-424, Asp-546, and Asp-547.

Belongs to the hepadnaviridae P protein family.

It carries out the reaction DNA(n) + a 2'-deoxyribonucleoside 5'-triphosphate = DNA(n+1) + diphosphate. The enzyme catalyses Endonucleolytic cleavage to 5'-phosphomonoester.. Its activity is regulated as follows. Activated by host HSP70 and HSP40 in vitro to be able to bind the epsilon loop of the pgRNA. Because deletion of the RNase H region renders the protein partly chaperone-independent, the chaperones may be needed indirectly to relieve occlusion of the RNA-binding site by this domain. Inhibited by several reverse-transcriptase inhibitors: Lamivudine, Adefovir and Entecavir. Its function is as follows. Multifunctional enzyme that converts the viral RNA genome into dsDNA in viral cytoplasmic capsids. This enzyme displays a DNA polymerase activity that can copy either DNA or RNA templates, and a ribonuclease H (RNase H) activity that cleaves the RNA strand of RNA-DNA heteroduplexes in a partially processive 3'- to 5'-endonucleasic mode. Neo-synthesized pregenomic RNA (pgRNA) are encapsidated together with the P protein, and reverse-transcribed inside the nucleocapsid. Initiation of reverse-transcription occurs first by binding the epsilon loop on the pgRNA genome, and is initiated by protein priming, thereby the 5'-end of (-)DNA is covalently linked to P protein. Partial (+)DNA is synthesized from the (-)DNA template and generates the relaxed circular DNA (RC-DNA) genome. After budding and infection, the RC-DNA migrates in the nucleus, and is converted into a plasmid-like covalently closed circular DNA (cccDNA). The activity of P protein does not seem to be necessary for cccDNA generation, and is presumably released from (+)DNA by host nuclear DNA repair machinery. This Homo sapiens (Human) protein is Protein P.